We begin with the raw amino-acid sequence, 98 residues long: Plastocyanin (98 aa).

Residues 1-98 (AQIVKLGGDD…AGMKMTITVQ (98 aa)) form the Plastocyanin-like domain. 4 residues coordinate Cu cation: histidine 38, cysteine 83, histidine 86, and methionine 91.

The protein belongs to the plastocyanin family. The cofactor is Cu(2+).

The protein localises to the plastid. Its subcellular location is the chloroplast thylakoid membrane. Functionally, participates in electron transfer between P700 and the cytochrome b6-f complex in photosystem I. This is Plastocyanin (PETE) from Ulva arasakii (Sea lettuce).